A 199-amino-acid chain; its full sequence is Superoxide dismutase [Mn/Fe] (199 aa).

Fe(3+) contacts are provided by histidine 27, histidine 81, aspartate 161, and histidine 165. Residues histidine 27, histidine 81, aspartate 161, and histidine 165 each contribute to the Mn(2+) site.

Belongs to the iron/manganese superoxide dismutase family. Homodimer. Mn(2+) serves as cofactor. Fe(3+) is required as a cofactor.

The catalysed reaction is 2 superoxide + 2 H(+) = H2O2 + O2. Destroys superoxide anion radicals which are normally produced within the cells and which are toxic to biological systems. Catalyzes the dismutation of superoxide anion radicals into O2 and H2O2 by successive reduction and oxidation of the transition metal ion at the active site. The sequence is that of Superoxide dismutase [Mn/Fe] (sodA) from Staphylococcus epidermidis.